Reading from the N-terminus, the 410-residue chain is Peptidase T (410 aa).

His-78 contributes to the Zn(2+) binding site. Asp-80 is an active-site residue. Residue Asp-140 coordinates Zn(2+). The Proton acceptor role is filled by Glu-173. The Zn(2+) site is built by Glu-174, Asp-196, and His-379.

Belongs to the peptidase M20B family. Zn(2+) serves as cofactor.

The protein resides in the cytoplasm. It catalyses the reaction Release of the N-terminal residue from a tripeptide.. Its function is as follows. Cleaves the N-terminal amino acid of tripeptides. This is Peptidase T from Pectobacterium carotovorum subsp. carotovorum (strain PC1).